Here is a 359-residue protein sequence, read N- to C-terminus: tRNA N6-adenosine threonylcarbamoyltransferase (359 aa).

Fe cation-binding residues include histidine 121 and histidine 125. Substrate contacts are provided by residues 143 to 147 (LVSGG), aspartate 176, glycine 189, and asparagine 286. Aspartate 311 is a binding site for Fe cation.

This sequence belongs to the KAE1 / TsaD family. The cofactor is Fe(2+).

It localises to the cytoplasm. The catalysed reaction is L-threonylcarbamoyladenylate + adenosine(37) in tRNA = N(6)-L-threonylcarbamoyladenosine(37) in tRNA + AMP + H(+). In terms of biological role, required for the formation of a threonylcarbamoyl group on adenosine at position 37 (t(6)A37) in tRNAs that read codons beginning with adenine. Is involved in the transfer of the threonylcarbamoyl moiety of threonylcarbamoyl-AMP (TC-AMP) to the N6 group of A37, together with TsaE and TsaB. TsaD likely plays a direct catalytic role in this reaction. The protein is tRNA N6-adenosine threonylcarbamoyltransferase of Jannaschia sp. (strain CCS1).